A 261-amino-acid polypeptide reads, in one-letter code: Ice-binding protein (261 aa).

The first 20 residues, 1–20 (MSLLSIITIGLAGLGGLVNG), serve as a signal peptide directing secretion. An N-linked (GlcNAc...) asparagine glycan is attached at N185.

Belongs to the ice-binding protein family. In terms of assembly, homodimer. Dimerization is not required for the thermal hysteresis (TH) activity. In terms of processing, glycosylated. Glycosylation is not required for the thermal hysteresis (TH) activity. Glycosylation may increase stability and secretion of this protein.

The protein localises to the secreted. In terms of biological role, confers freeze tolerance. Binds to the surface of ice crystals and inhibits their growth. Has low thermal hysteresis (TH) activity, which is the ability to lower the freezing point of an aqueous solution below its melting point. The TH activity of this protein is approximately 0.2 degrees Celsius at 50 uM and 0.3 degrees Celsius at 400 uM. The chain is Ice-binding protein from Leucosporidium sp. (strain AY30) (Arctic yeast).